A 62-amino-acid chain; its full sequence is Large ribosomal subunit protein uL30 (62 aa).

This sequence belongs to the universal ribosomal protein uL30 family. As to quaternary structure, part of the 50S ribosomal subunit.

The protein is Large ribosomal subunit protein uL30 of Paracoccus denitrificans (strain Pd 1222).